The sequence spans 315 residues: Dihydroorotate dehydrogenase (fumarate) (315 aa).

Residues Lys46, 70-74 (NSMGL), and Asn130 each bind substrate. 46–47 (KS) lines the FMN pocket. Residue Asn130 participates in FMN binding. The Nucleophile role is filled by Cys133. Positions 167 and 195 each coordinate FMN. 196–197 (NS) serves as a coordination point for substrate. FMN contacts are provided by residues Gly224, 252–253 (GG), and 274–275 (GT).

This sequence belongs to the dihydroorotate dehydrogenase family. Type 1 subfamily. Homodimer. FMN serves as cofactor.

It is found in the cytoplasm. The enzyme catalyses (S)-dihydroorotate + fumarate = orotate + succinate. The protein operates within pyrimidine metabolism; UMP biosynthesis via de novo pathway. Functionally, catalyzes the conversion of dihydroorotate to orotate with fumarate as the electron acceptor. The sequence is that of Dihydroorotate dehydrogenase (fumarate) (URA1) from Kluyveromyces lactis (strain ATCC 8585 / CBS 2359 / DSM 70799 / NBRC 1267 / NRRL Y-1140 / WM37) (Yeast).